We begin with the raw amino-acid sequence, 434 residues long: F-box/FBD/LRR-repeat protein At3g26920 (434 aa).

The 50-residue stretch at 16–65 (EDRISQLPEALLLQILSLLPTKEVVAVSVLAKRWRFLWKMVPSLEFFYYF) folds into the F-box domain. LRR repeat units follow at residues 69-95 (LERFSYNVSKCLFSHQAPFLQSLHLNM), 100-125 (DPRIMDFEILIGIAFGRQLRKLVLKV), 145-172 (TLELYHCILIDVPFPVCLKSLRTLNLHE), 173-198 (VEFVNDESVVNLLAGCISLENLVIHQ), 219-244 (VIVEYYEEFSVFVVNTPSLKYLKIEG), 265-290 (IIDVSFKVFESILGSLASVQRLSLKV), and 315-341 (TYKPKWWNLLTLMLDTSPNLQVLKIFD). The FBD domain occupies 353–403 (KWNEPKNVPECLLLHLETFVWTCYEGKLENEIELAKYILRNARRLKKATFS).

The protein is F-box/FBD/LRR-repeat protein At3g26920 of Arabidopsis thaliana (Mouse-ear cress).